The sequence spans 193 residues: 21 kDa protein (193 aa).

Residues 1–22 (MKLSKSTLVFSALLVILAAASA) form the signal peptide.

In Daucus carota (Wild carrot), this protein is 21 kDa protein.